A 281-amino-acid chain; its full sequence is NAC domain-containing protein 6 (281 aa).

The NAC domain occupies 4-156; the sequence is LPVGSRFCPT…QDALTGFADQ (153 aa). 2 disordered regions span residues 84–109 and 211–249; these read GGSEGGTWRSNDGKKEIKDGHMQKGD and LEGHEDREQPEEAELTVTQQQQQQQQQQQRQEDCDVTQE. Residues 94–109 show a composition bias toward basic and acidic residues; the sequence is NDGKKEIKDGHMQKGD. The DNA-binding element occupies 109–162; the sequence is DGLRASDDLQKVVLCRIRYKKEANVNEFGLVNHQAHQTQDALTGFADQLEMMLE. Positions 229–239 are enriched in low complexity; the sequence is QQQQQQQQQQQ.

It localises to the nucleus. This is NAC domain-containing protein 6 (NAC006) from Arabidopsis thaliana (Mouse-ear cress).